The primary structure comprises 508 residues: Catalase (508 aa).

Active-site residues include His63 and Asn136. Tyr346 lines the heme pocket.

Belongs to the catalase family. As to quaternary structure, homohexamer. The cofactor is heme.

It localises to the cytoplasm. The catalysed reaction is 2 H2O2 = O2 + 2 H2O. Functionally, decomposes hydrogen peroxide into water and oxygen; serves to protect cells from the toxic effects of hydrogen peroxide. This Haemophilus influenzae (strain ATCC 51907 / DSM 11121 / KW20 / Rd) protein is Catalase (katA).